Consider the following 142-residue polypeptide: MATFNLTVVSAEEKIFEGAVKSIQATGSEGELGILAGHIPLLTGIKPGIVKITREDNSEEVLYVSGGFLEVQPNIVTVLADVAIRGIELDQERILNAKRKAEDNIVAKHADVDHNLLVAKLSKELAKLRAYELTEKLVKNKR.

Belongs to the ATPase epsilon chain family. In terms of assembly, F-type ATPases have 2 components, CF(1) - the catalytic core - and CF(0) - the membrane proton channel. CF(1) has five subunits: alpha(3), beta(3), gamma(1), delta(1), epsilon(1). CF(0) has three main subunits: a, b and c.

It localises to the cell inner membrane. Produces ATP from ADP in the presence of a proton gradient across the membrane. The polypeptide is ATP synthase epsilon chain (Actinobacillus succinogenes (strain ATCC 55618 / DSM 22257 / CCUG 43843 / 130Z)).